A 360-amino-acid polypeptide reads, in one-letter code: 3-dehydroquinate synthase (360 aa).

NAD(+) contacts are provided by residues 70–75 (DGEKYK), 104–108 (GVIGD), 128–129 (TT), Lys141, and Lys150. Zn(2+) is bound by residues Glu183, His246, and His263.

Belongs to the sugar phosphate cyclases superfamily. Dehydroquinate synthase family. The cofactor is Co(2+). Requires Zn(2+) as cofactor. NAD(+) is required as a cofactor.

Its subcellular location is the cytoplasm. The catalysed reaction is 7-phospho-2-dehydro-3-deoxy-D-arabino-heptonate = 3-dehydroquinate + phosphate. It functions in the pathway metabolic intermediate biosynthesis; chorismate biosynthesis; chorismate from D-erythrose 4-phosphate and phosphoenolpyruvate: step 2/7. In terms of biological role, catalyzes the conversion of 3-deoxy-D-arabino-heptulosonate 7-phosphate (DAHP) to dehydroquinate (DHQ). This chain is 3-dehydroquinate synthase, found in Acinetobacter baumannii (strain AYE).